An 89-amino-acid polypeptide reads, in one-letter code: Small ribosomal subunit protein uS15 (89 aa).

It belongs to the universal ribosomal protein uS15 family. As to quaternary structure, part of the 30S ribosomal subunit. Forms a bridge to the 50S subunit in the 70S ribosome, contacting the 23S rRNA.

In terms of biological role, one of the primary rRNA binding proteins, it binds directly to 16S rRNA where it helps nucleate assembly of the platform of the 30S subunit by binding and bridging several RNA helices of the 16S rRNA. Functionally, forms an intersubunit bridge (bridge B4) with the 23S rRNA of the 50S subunit in the ribosome. This Clavibacter michiganensis subsp. michiganensis (strain NCPPB 382) protein is Small ribosomal subunit protein uS15.